Here is a 37-residue protein sequence, read N- to C-terminus: Large ribosomal subunit protein bL36 (37 aa).

It belongs to the bacterial ribosomal protein bL36 family.

This chain is Large ribosomal subunit protein bL36, found in Polaromonas naphthalenivorans (strain CJ2).